Reading from the N-terminus, the 92-residue chain is Protein 10 (92 aa).

The region spanning 18–29 (FMQKYDKNSDQH) is the EF-hand domain.

The protein belongs to the calbindin family. As to expression, brain.

The polypeptide is Protein 10 (Cavia porcellus (Guinea pig)).